Consider the following 94-residue polypeptide: uncharacterized protein (94 aa).

This is an uncharacterized protein from Archaeoglobus fulgidus (strain ATCC 49558 / DSM 4304 / JCM 9628 / NBRC 100126 / VC-16).